The chain runs to 153 residues: MKLRRQLCIIDIINQKEVATQEELCETLKNQGFDVTQATVSRDIKELKLIKVADKDGYHYALPDTPGVKGSFERMKRVIEDSVLGLDYSENLIIIKTLPGSAHAVASLIDSAEWPTIIGTVAGDDTILAVVKPKEAAPGIVEEFEQLMLKSNR.

The protein belongs to the ArgR family.

It is found in the cytoplasm. It participates in amino-acid biosynthesis; L-arginine biosynthesis [regulation]. Its function is as follows. Regulates arginine biosynthesis genes. In Syntrophomonas wolfei subsp. wolfei (strain DSM 2245B / Goettingen), this protein is Arginine repressor.